Here is a 388-residue protein sequence, read N- to C-terminus: MKKAVHFGAGNIGRGFIGEILSKNGFEIYFVDTNKAIIDELNTRHSYEIGIASSSPEKISVSGVFGINNGENPKDVIEAIAQADIVTTAIGPNILPYIAELVAKGIQKRKEENKQVQIDIIACENMIGGSEFLEKKVAEYLSDSDKVYLANYIGFPNAAVDRIVPGQKHEDLLYVEVEPFCEWVIDESQIKNKSFKLEGVHYASNLEPFIERKLFSVNSGHATVAYSSAYKGYKTILEGLQHKEILSALKGVQKETRALLLAKWPQYFTEEDLMSYHQMIISRFANPKIIDEVTRVARTPIRKLGYDERFIRPIRELNERGLSYQNHLDIVGKIFAYQDENDSQSVQLQEKLSTMDFQRLIEEVTGLSNKKIILEIELVIKKYKNDSK.

NAD(+) is bound at residue 4–15; that stretch reads AVHFGAGNIGRG.

It belongs to the mannitol dehydrogenase family.

The enzyme catalyses D-mannitol 1-phosphate + NAD(+) = beta-D-fructose 6-phosphate + NADH + H(+). The chain is Mannitol-1-phosphate 5-dehydrogenase from Lactococcus lactis subsp. cremoris (strain MG1363).